Reading from the N-terminus, the 311-residue chain is Probable manganese-dependent inorganic pyrophosphatase (311 aa).

Mn(2+)-binding residues include histidine 9, aspartate 13, aspartate 15, aspartate 75, histidine 97, and aspartate 149.

It belongs to the PPase class C family. Requires Mn(2+) as cofactor.

The protein localises to the cytoplasm. It carries out the reaction diphosphate + H2O = 2 phosphate + H(+). The polypeptide is Probable manganese-dependent inorganic pyrophosphatase (Lactobacillus delbrueckii subsp. bulgaricus (strain ATCC BAA-365 / Lb-18)).